The following is a 173-amino-acid chain: Translation initiation factor IF-3 (173 aa).

Belongs to the IF-3 family. As to quaternary structure, monomer.

It is found in the cytoplasm. In terms of biological role, IF-3 binds to the 30S ribosomal subunit and shifts the equilibrium between 70S ribosomes and their 50S and 30S subunits in favor of the free subunits, thus enhancing the availability of 30S subunits on which protein synthesis initiation begins. This is Translation initiation factor IF-3 from Caulobacter sp. (strain K31).